The following is a 147-amino-acid chain: Leghemoglobin 3 (147 aa).

The 146-residue stretch at 2 to 147 (GFTAQQEALV…LATAIKKAMG (146 aa)) folds into the Globin domain. Tyr30 bears the Nitrated tyrosine mark. Ser45 contributes to the heme b binding site. Ser45 carries the phosphoserine modification. His61 serves as a coordination point for O2. Residues Lys64, His93, and Lys96 each coordinate heme b. Tyr135 bears the Nitrated tyrosine mark.

This sequence belongs to the plant globin family. As to quaternary structure, monomer. In terms of processing, nitrated in effective nodules and particularly in hypoxic conditions; this mechanism may play a protective role in the symbiosis by buffering toxic peroxynitrite NO(2)(-). Nitration level decrease during nodule senescence. Post-translationally, phosphorylation at Ser-45 disrupts the molecular environment of its porphyrin ring oxygen binding pocket, thus leading to a reduced oxygen consumption and to the delivery of oxygen O(2) to symbiosomes. Specifically and strongly expressed in root nodules and at low levels in seedlings.

The protein localises to the cytoplasm. Its subcellular location is the cytosol. The protein resides in the nucleus. Functionally, leghemoglobin that reversibly binds oxygen O(2) through a pentacoordinated heme iron. In root nodules, facilitates the diffusion of oxygen to the bacteroids while preventing the bacterial nitrogenase from being inactivated by buffering dioxygen, nitric oxide and carbon monoxide, and promoting the formation of reactive oxygen species (ROS, e.g. H(2)O(2)). This role is essential for symbiotic nitrogen fixation (SNF). In Lotus japonicus (Lotus corniculatus var. japonicus), this protein is Leghemoglobin 3.